Here is a 505-residue protein sequence, read N- to C-terminus: Catalase (505 aa).

Residues His58 and Asn131 contribute to the active site. Tyr341 contributes to the heme binding site.

The protein belongs to the catalase family. It depends on heme as a cofactor.

The catalysed reaction is 2 H2O2 = O2 + 2 H2O. Functionally, decomposes hydrogen peroxide into water and oxygen; serves to protect cells from the toxic effects of hydrogen peroxide. In Methanosarcina barkeri (strain Fusaro / DSM 804), this protein is Catalase (kat).